Here is a 362-residue protein sequence, read N- to C-terminus: Atypical chemokine receptor 3 (362 aa).

The Extracellular portion of the chain corresponds to 1 to 40; sequence MDLHLFDYSEPGNFSDISWPCNSSDCIVVDTVMCPNMPNK. Asparagine 13, asparagine 22, and asparagine 39 each carry an N-linked (GlcNAc...) asparagine glycan. A helical membrane pass occupies residues 41–61; it reads SVLLYTLSFIYIFIFVIGMIA. Residues 62 to 81 are Cytoplasmic-facing; that stretch reads NSVVVWVNIQAKTTGYDTHC. A helical transmembrane segment spans residues 82-102; sequence YILNLAIADLWVVLTIPVWVV. Residues 103 to 118 lie on the Extracellular side of the membrane; the sequence is SLVQHNQWPMGELTCK. The cysteines at positions 117 and 196 are disulfide-linked. The chain crosses the membrane as a helical span at residues 119–139; the sequence is VTHLIFSINLFGSIFFLTCMS. Residues 140–162 are Cytoplasmic-facing; sequence VDRYLSITYFTNTPSSRKKMVRR. Residues 163–183 traverse the membrane as a helical segment; it reads VVCILVWLLAFCVSLPDTYYL. The Extracellular segment spans residues 184-213; that stretch reads KTVTSASNNETYCRSFYPEHSIKEWLIGME. A helical transmembrane segment spans residues 214–234; that stretch reads LVSVVLGFAVPFSIIAVFYFL. Topologically, residues 235 to 252 are cytoplasmic; sequence LARAISASSDQEKHSSRK. A helical transmembrane segment spans residues 253-273; the sequence is IIFSYVVVFLVCWLPYHVAVL. At 274 to 296 the chain is on the extracellular side; it reads LDIFSILHYIPFTCRLEHALFTA. Residues 297–319 traverse the membrane as a helical segment; it reads LHVTQCLSLVHCCVNPVLYSFIN. The Cytoplasmic portion of the chain corresponds to 320-362; the sequence is RNYRYELMKAFIFKYSAKTGLTKLIDASRVSETEYSALEQSTK. Positions 324–362 are C-terminal cytoplasmic tail; the sequence is YELMKAFIFKYSAKTGLTKLIDASRVSETEYSALEQSTK. 3 positions are modified to phosphoserine: serine 347, serine 350, and serine 355.

This sequence belongs to the G-protein coupled receptor 1 family. Atypical chemokine receptor subfamily. In terms of assembly, homodimer. Can form heterodimers with CXCR4; heterodimerization may regulate CXCR4 signaling activity. Interacts with ARRB1 and ARRB2. In terms of processing, the Ser/Thr residues in the C-terminal cytoplasmic tail may be phosphorylated. Ubiquitinated at the Lys residues in its C-terminal cytoplasmic tail and is essential for correct trafficking from and to the cell membrane. Deubiquitinated by CXCL12-stimulation in a reversible manner. In terms of tissue distribution, expressed in monocytes, basophils, B-cells, umbilical vein endothelial cells (HUVEC) and B-lymphoblastoid cells. Lower expression detected in CD4+ T-lymphocytes and natural killer cells. In the brain, detected in endothelial cells and capillaries, and in mature neurons of the frontal cortex and hippocampus. Expressed in tubular formation in the kidney. Highly expressed in astroglial tumor endothelial, microglial and glioma cells. Expressed at low levels in normal CD34+ progenitor cells, but at very high levels in several myeloid malignant cell lines. Expressed in breast carcinomas but not in normal breast tissue (at protein level).

The protein localises to the cell membrane. The protein resides in the early endosome. Its subcellular location is the recycling endosome. In terms of biological role, atypical chemokine receptor that controls chemokine levels and localization via high-affinity chemokine binding that is uncoupled from classic ligand-driven signal transduction cascades, resulting instead in chemokine sequestration, degradation, or transcytosis. Also known as interceptor (internalizing receptor) or chemokine-scavenging receptor or chemokine decoy receptor. Acts as a receptor for chemokines CXCL11 and CXCL12/SDF1. Chemokine binding does not activate G-protein-mediated signal transduction but instead induces beta-arrestin recruitment, leading to ligand internalization and activation of MAPK signaling pathway. Required for regulation of CXCR4 protein levels in migrating interneurons, thereby adapting their chemokine responsiveness. In glioma cells, transduces signals via MEK/ERK pathway, mediating resistance to apoptosis. Promotes cell growth and survival. Not involved in cell migration, adhesion or proliferation of normal hematopoietic progenitors but activated by CXCL11 in malignant hemapoietic cells, leading to phosphorylation of ERK1/2 (MAPK3/MAPK1) and enhanced cell adhesion and migration. Plays a regulatory role in CXCR4-mediated activation of cell surface integrins by CXCL12. Required for heart valve development. Regulates axon guidance in the oculomotor system through the regulation of CXCL12 levels. Functionally, (Microbial infection) Acts as a coreceptor with CXCR4 for a restricted number of HIV isolates. The sequence is that of Atypical chemokine receptor 3 from Homo sapiens (Human).